We begin with the raw amino-acid sequence, 148 residues long: Snaclec B1 (148 aa).

Positions 1-24 are cleaved as a signal peptide; sequence MGRIIFVSFGLLVVFLSLSGTGAA. Cystine bridges form between cysteine 27-cysteine 38, cysteine 55-cysteine 144, and cysteine 121-cysteine 136. A C-type lectin domain is found at 34–145; the sequence is YDQHCYKVFD…CRLLGHFVCK (112 aa).

This sequence belongs to the snaclec family. As to quaternary structure, heterodimer; disulfide-linked. Expressed by the venom gland.

It localises to the secreted. Its function is as follows. Interferes with one step of hemostasis (modulation of platelet aggregation, or coagulation cascade, for example). In Macrovipera lebetinus (Levantine viper), this protein is Snaclec B1.